The primary structure comprises 968 residues: RNA polymerase-associated protein RapA (968 aa).

The region spanning D164 to N334 is the Helicase ATP-binding domain. D177–T184 provides a ligand contact to ATP. The DEAH box signature appears at D280–H283. A Helicase C-terminal domain is found at R490–R685.

Belongs to the SNF2/RAD54 helicase family. RapA subfamily. In terms of assembly, interacts with the RNAP. Has a higher affinity for the core RNAP than for the holoenzyme. Its ATPase activity is stimulated by binding to RNAP.

Functionally, transcription regulator that activates transcription by stimulating RNA polymerase (RNAP) recycling in case of stress conditions such as supercoiled DNA or high salt concentrations. Probably acts by releasing the RNAP, when it is trapped or immobilized on tightly supercoiled DNA. Does not activate transcription on linear DNA. Probably not involved in DNA repair. In Salmonella paratyphi A (strain ATCC 9150 / SARB42), this protein is RNA polymerase-associated protein RapA.